An 804-amino-acid chain; its full sequence is Leucine--tRNA ligase (804 aa).

The 'HIGH' region motif lies at 40-51 (PYPSGAGLHVGH). Positions 576–580 (KMSKS) match the 'KMSKS' region motif. Position 579 (Lys579) interacts with ATP.

This sequence belongs to the class-I aminoacyl-tRNA synthetase family.

Its subcellular location is the cytoplasm. The enzyme catalyses tRNA(Leu) + L-leucine + ATP = L-leucyl-tRNA(Leu) + AMP + diphosphate. The chain is Leucine--tRNA ligase from Bacillus subtilis (strain 168).